Consider the following 118-residue polypeptide: Large ribosomal subunit protein uL24 (118 aa).

It belongs to the universal ribosomal protein uL24 family. As to quaternary structure, part of the 50S ribosomal subunit.

One of two assembly initiator proteins, it binds directly to the 5'-end of the 23S rRNA, where it nucleates assembly of the 50S subunit. In terms of biological role, one of the proteins that surrounds the polypeptide exit tunnel on the outside of the subunit. This chain is Large ribosomal subunit protein uL24, found in Synechococcus sp. (strain CC9605).